Reading from the N-terminus, the 230-residue chain is Ion-translocating oxidoreductase complex subunit E (230 aa).

6 consecutive transmembrane segments (helical) span residues 18-38, 39-59, 63-83, 86-106, 125-145, and 182-202; these read ALVQ…ATNA, LGLG…ISAL, TPAE…VSAV, LINA…PLIV, ALSA…MFVL, and PFLL…MLAV.

This sequence belongs to the NqrDE/RnfAE family. As to quaternary structure, the complex is composed of six subunits: RnfA, RnfB, RnfC, RnfD, RnfE and RnfG.

The protein resides in the cell inner membrane. In terms of biological role, part of a membrane-bound complex that couples electron transfer with translocation of ions across the membrane. This is Ion-translocating oxidoreductase complex subunit E from Citrobacter koseri (strain ATCC BAA-895 / CDC 4225-83 / SGSC4696).